Reading from the N-terminus, the 481-residue chain is CASP8 and FADD-like apoptosis regulator (481 aa).

DED domains lie at 6–78 and 97–172; these read VSAE…RILK and DYRV…LNTK. Positions 6–200 are interaction with CASP8; sequence VSAEVIHQVE…QASLPKLSIK (195 aa). The segment at 6–229 is interaction with FADD; it reads VSAEVIHQVE…DSQRTLVKTS (224 aa). An interaction with CASP8 propeptide region spans residues 6–307; sequence VSAEVIHQVE…YASMAQHQDY (302 aa). An interaction with CASP3 region spans residues 197-436; sequence LSIKYNSRLQ…KLSQQLKQGR (240 aa). The interaction with TRAF1 and TRAF2 stretch occupies residues 197 to 481; that stretch reads LSIKYNSRLQ…LRKKLILAPT (285 aa). Positions 219–481 are interaction with CASP8 subunits p18 and p10; it reads RDSQRTLVKT…LRKKLILAPT (263 aa). The segment at 265–360 is caspase; it reads DTKYLQETFT…RGKPKLFFIQ (96 aa). The tract at residues 372 to 481 is interaction with CASP8; the sequence is SSLEVDGPSI…LRKKLILAPT (110 aa).

Belongs to the peptidase C14A family. As to quaternary structure, TNFRSF6 stimulation triggers recruitment to the death-inducing signaling complex (DISC) formed by TNFRSF6, FADD and CASP8. A proteolytic fragment (p43) stays associated with the DISC. Interacts with RIPK1. Post-translationally, proteolytically processed by CASP8 generating subunits p43 and p12. In terms of tissue distribution, highly expressed in heart.

Apoptosis regulator protein which may function as a crucial link between cell survival and cell death pathways in mammalian cells. Acts as an inhibitor of TNFRSF6 mediated apoptosis. A proteolytic fragment (p43) is likely retained in the death-inducing signaling complex (DISC) thereby blocking further recruitment and processing of caspase-8 at the complex. Full length and shorter isoforms have been shown either to induce apoptosis or to reduce TNFRSF-triggered apoptosis. Lacks enzymatic (caspase) activity. The chain is CASP8 and FADD-like apoptosis regulator (Cflar) from Mus musculus (Mouse).